The following is a 515-amino-acid chain: Microtubule-associated protein 70-4 (515 aa).

Coiled-coil stretches lie at residues 26-106 and 136-351; these read VVDE…ALSA and LESD…NTSA. Positions 208–410 are required for targeting to microtubules; that stretch reads LLEKSNRQQV…KQPGSETEAA (203 aa). Residues 340–515 are disordered; it reads DDMRNESSNT…VKSTKDSCEI (176 aa). A compositionally biased stretch (polar residues) spans 345-362; sequence ESSNTSASNKDNATSKQA. A compositionally biased stretch (low complexity) spans 364–374; it reads PKRSSSQPRRP. Composition is skewed to basic and acidic residues over residues 409–425, 450–461, and 484–515; these read AAEKNRHAAAKRFDSPR, KVADDAGKENKE, and SEHEEAMDLRKLDEGKADDSDAVKSTKDSCEI.

It belongs to the MAP70 family.

Its subcellular location is the cytoplasm. It is found in the cytoskeleton. Functionally, plant-specific protein that interact with microtubules. The chain is Microtubule-associated protein 70-4 (MAP70.4) from Oryza sativa subsp. japonica (Rice).